Consider the following 266-residue polypeptide: MVCLKLPGGSCMAALTVTLTVLSSPLALAGDTQPRFLEQAKCECHFLNGTERVWNLIRYIYNQEEYARYNSDLGEYQAVTELGRPDAEYWNSQKDLLERRRAEVDTYCRYNYGVVESFTVQRRVQPKVTVYPSKTQPLQHHNLLVCSVNGFYPGSIEVRWFRNGQEEKAGVVSTGLIQNGDWTFQTLVMLETVPRSGEVYTCQVEHPSMMSPLTVQWSARSESAQSKMLSGVGGFVLGLLFLGTGLFIYFRNQKGHSGLQPTGLLS.

An N-terminal signal peptide occupies residues 1–29 (MVCLKLPGGSCMAALTVTLTVLSSPLALA). Residues 30-124 (GDTQPRFLEQ…VESFTVQRRV (95 aa)) form a beta-1 region. Residues 30-227 (GDTQPRFLEQ…SARSESAQSK (198 aa)) are Extracellular-facing. 2 disulfides stabilise this stretch: Cys-44/Cys-108 and Cys-146/Cys-202. N-linked (GlcNAc...) asparagine glycosylation is present at Asn-48. The beta-2 stretch occupies residues 125-227 (QPKVTVYPSK…SARSESAQSK (103 aa)). In terms of domain architecture, Ig-like C1-type spans 126-216 (PKVTVYPSKT…PSMMSPLTVQ (91 aa)). The chain crosses the membrane as a helical span at residues 228 to 250 (MLSGVGGFVLGLLFLGTGLFIYF). Residues 251-266 (RNQKGHSGLQPTGLLS) are Cytoplasmic-facing. Lys-254 participates in a covalent cross-link: Glycyl lysine isopeptide (Lys-Gly) (interchain with G-Cter in ubiquitin).

It belongs to the MHC class II family. In terms of assembly, heterodimer of an alpha and a beta subunit; also referred as MHC class II molecule. In the endoplasmic reticulum (ER) it forms a heterononamer; 3 MHC class II molecules bind to a CD74 homotrimer (also known as invariant chain or HLA class II histocompatibility antigen gamma chain). In the endosomal/lysosomal system; CD74 undergoes sequential degradation by various proteases; leaving a small fragment termed CLIP on each MHC class II molecule. MHC class II molecule interacts with HLA_DM, and HLA_DO in B-cells, in order to release CLIP and facilitate the binding of antigenic peptides. Post-translationally, ubiquitinated by MARCH1 and MARCH8 at Lys-254 leading to sorting into the endosome system and down-regulation of MHC class II. When associated with ubiquitination of the alpha subunit of HLA-DR: HLA-DRA 'Lys-244', the down-regulation of MHC class II may be highly effective.

The protein localises to the cell membrane. The protein resides in the endoplasmic reticulum membrane. It localises to the golgi apparatus. Its subcellular location is the trans-Golgi network membrane. It is found in the endosome membrane. The protein localises to the lysosome membrane. The protein resides in the late endosome membrane. In terms of biological role, binds peptides derived from antigens that access the endocytic route of antigen presenting cells (APC) and presents them on the cell surface for recognition by the CD4 T-cells. The peptide binding cleft accommodates peptides of 10-30 residues. The peptides presented by MHC class II molecules are generated mostly by degradation of proteins that access the endocytic route, where they are processed by lysosomal proteases and other hydrolases. Exogenous antigens that have been endocytosed by the APC are thus readily available for presentation via MHC II molecules, and for this reason this antigen presentation pathway is usually referred to as exogenous. As membrane proteins on their way to degradation in lysosomes as part of their normal turn-over are also contained in the endosomal/lysosomal compartments, exogenous antigens must compete with those derived from endogenous components. Autophagy is also a source of endogenous peptides, autophagosomes constitutively fuse with MHC class II loading compartments. In addition to APCs, other cells of the gastrointestinal tract, such as epithelial cells, express MHC class II molecules and CD74 and act as APCs, which is an unusual trait of the GI tract. To produce a MHC class II molecule that presents an antigen, three MHC class II molecules (heterodimers of an alpha and a beta chain) associate with a CD74 trimer in the ER to form a heterononamer. Soon after the entry of this complex into the endosomal/lysosomal system where antigen processing occurs, CD74 undergoes a sequential degradation by various proteases, including CTSS and CTSL, leaving a small fragment termed CLIP (class-II-associated invariant chain peptide). The removal of CLIP is facilitated by HLA-DM via direct binding to the alpha-beta-CLIP complex so that CLIP is released. HLA-DM stabilizes MHC class II molecules until primary high affinity antigenic peptides are bound. The MHC II molecule bound to a peptide is then transported to the cell membrane surface. In B-cells, the interaction between HLA-DM and MHC class II molecules is regulated by HLA-DO. Primary dendritic cells (DCs) also to express HLA-DO. Lysosomal microenvironment has been implicated in the regulation of antigen loading into MHC II molecules, increased acidification produces increased proteolysis and efficient peptide loading. The chain is HLA class II histocompatibility antigen, DR beta 4 chain (HLA-DRB4) from Homo sapiens (Human).